Here is a 311-residue protein sequence, read N- to C-terminus: tRNA dimethylallyltransferase (311 aa).

Residue 19–26 coordinates ATP; it reads GPSGSGKS. Residue 21–26 coordinates substrate; the sequence is SGSGKS. Residues 44–47 are interaction with substrate tRNA; the sequence is DSLS.

This sequence belongs to the IPP transferase family. Monomer. The cofactor is Mg(2+).

The enzyme catalyses adenosine(37) in tRNA + dimethylallyl diphosphate = N(6)-dimethylallyladenosine(37) in tRNA + diphosphate. Catalyzes the transfer of a dimethylallyl group onto the adenine at position 37 in tRNAs that read codons beginning with uridine, leading to the formation of N6-(dimethylallyl)adenosine (i(6)A). This is tRNA dimethylallyltransferase from Helicobacter pylori (strain ATCC 700392 / 26695) (Campylobacter pylori).